A 613-amino-acid polypeptide reads, in one-letter code: SNW/SKI-interacting protein (613 aa).

A coiled-coil region spans residues 135–170 (EGDLGTVVDEEEELQKEIQETAEETKAAIEKIVNVR). The interval 186-350 (SQYIKYKPSQ…KARSERTGAA (165 aa)) is SNW. Disordered regions lie at residues 219–252 (LDPPKFKHKRVPRASGSPPVPVMHSPPRPVTVKD), 315–437 (MRSK…RDRD), and 513–613 (DEQL…SDRR). Phosphoserine occurs at positions 235 and 243. Residues 236 to 247 (PPVPVMHSPPRP) are compositionally biased toward pro residues. Basic and acidic residues-rich tracts occupy residues 315–335 (MRSKVQKEMVMKDKERKEQEL), 358–437 (DRGR…RDRD), 515–529 (QLDKIKNTERFKPDK), 538–548 (VGSKRDRPVEF), and 562–574 (WVSDLKKGKKPLD). Coiled-coil stretches lie at residues 318–349 (KVQKEMVMKDKERKEQELRALAQKARSERTGA) and 391–421 (REEREKRIQREKIREERRRERERERRLDAKD). Residues 577–590 (GSGGTMRASGGGGS) are compositionally biased toward gly residues. A compositionally biased stretch (basic and acidic residues) spans 592–613 (SRDDDHGGSGRTKINFERSDRR).

This sequence belongs to the SNW family. As to quaternary structure, component of the spliceosome. Interacts with SR45. In terms of tissue distribution, expressed in roots, stems, seedlings, siliques, cotyledons, leaves, inflorescences, seeds and shoot apical meristem.

It localises to the nucleus speckle. Its function is as follows. Splicing factor involved in post-transcriptional regulation of circadian clock and flowering time genes. Associates with the pre-mRNA of PRR7, PRR9, ELF3 and GI, and is necessary for the regulation of their alternative splicing and mRNA maturation. Probably involved in splice site recognition. The polypeptide is SNW/SKI-interacting protein (SKIP) (Arabidopsis thaliana (Mouse-ear cress)).